The chain runs to 488 residues: Auxin transporter-like protein 1 (488 aa).

The tract at residues 1–36 (MSGEKQAEESIVVSGEDEVAGRKVEDSAAEEDIDGN) is disordered. Residues 1–64 (MSGEKQAEES…DAWFSCASNQ (64 aa)) are Cytoplasmic-facing. The chain crosses the membrane as a helical span at residues 65–82 (VAQVLLTLPYSFSQLGML). At 83–84 (SG) the chain is on the extracellular side. A helical transmembrane segment spans residues 85–105 (ILLQIFYGLMGSWTAYLISVL). At 106 to 141 (YVEYRARMEKQEAKSFKNHVIQWFEVLDGLLGPYWK) the chain is on the cytoplasmic side. A helical transmembrane segment spans residues 142 to 162 (AAGLAFNCTFLLFGSVIQLIA). At 163–178 (CASNIYYINDRLDKRT) the chain is on the extracellular side. The chain crosses the membrane as a helical span at residues 179-199 (WTYIFGACCATTVFIPSFHNY). Residues 200–202 (RIW) are Cytoplasmic-facing. The helical transmembrane segment at 203–223 (SFLGLGMTTYTAWYLTIASFL) threads the bilayer. Residues 224–238 (HGQAEGVTHSGPTKL) lie on the Extracellular side of the membrane. The helical transmembrane segment at 239–259 (VLYFTGATNILYTFGGHAVTV) threads the bilayer. The Cytoplasmic segment spans residues 260-273 (EIMHAMWKPRKFKS). Residues 274 to 294 (IYLMATLYVFTLTLPSASAVY) form a helical membrane-spanning segment. Residues 295–320 (WAFGDQLLNHSNAFSLLPKTRFRDTA) lie on the Extracellular side of the membrane. An N-linked (GlcNAc...) asparagine glycan is attached at Asn-303. The chain crosses the membrane as a helical span at residues 321-341 (VILMLIHQFITFGFACTPLYF). Topologically, residues 342-362 (VWEKAIGMHHTKSLCLRALVR) are cytoplasmic. The helical transmembrane segment at 363–383 (LPVVVPIWFLAIIFPFFGPIN) threads the bilayer. Ser-384 is a topological domain (extracellular). The chain crosses the membrane as a helical span at residues 385–405 (AVGALLVTFTVYIIPALAHML). Residues 406–427 (TYRTASARRNAAEKPPFFIPSW) are Cytoplasmic-facing. Residues 428–448 (AGVYVINAFIVVWVLVLGFGF) form a helical membrane-spanning segment. Over 449 to 488 (GGWASMTNFIRQIDTFGLFAKCYQCKPPPAPIAAGAHHRR) the chain is Extracellular.

It belongs to the amino acid/polyamine transporter 2 family. Amino acid/auxin permease (AAAP) (TC 2.A.18.1) subfamily.

The protein localises to the cell membrane. Functionally, carrier protein involved in proton-driven auxin influx. Mediates the formation of auxin gradient from developing leaves (site of auxin biosynthesis) to tips by contributing to the loading of auxin in vascular tissues and facilitating acropetal (base to tip) auxin transport within inner tissues of the root apex, and basipetal (tip to base) auxin transport within outer tissues of the root apex. In Arabidopsis thaliana (Mouse-ear cress), this protein is Auxin transporter-like protein 1 (LAX1).